Consider the following 351-residue polypeptide: Rhodopsin (351 aa).

At 1–36 the chain is on the extracellular side; the sequence is MNGTEGPFFYIPMVNTTGIVRSPYEYPQYYLVNPAA. N-linked (GlcNAc...) asparagine glycans are attached at residues asparagine 2 and asparagine 15. A helical transmembrane segment spans residues 37–61; it reads YAILGAYMFFLIIVGFPVNFMTLYV. Topologically, residues 62 to 73 are cytoplasmic; the sequence is TLEHKKLRTPLN. A helical transmembrane segment spans residues 74 to 96; sequence YILLNLAVADLFMVIGGFTTTMY. Topologically, residues 97–110 are extracellular; it reads TSMHGYFVLGRLGC. A disulfide bond links cysteine 110 and cysteine 187. A helical membrane pass occupies residues 111–133; it reads NLEGFFATLGGMISLWSLAVLAI. The short motif at 134 to 136 is the 'Ionic lock' involved in activated form stabilization element; that stretch reads ERW. The Cytoplasmic segment spans residues 134–152; sequence ERWVVVCKPISNFRFGENH. Residues 153-173 form a helical membrane-spanning segment; it reads AIMGVSLTWGMALACTVPPLV. Residues 174–202 lie on the Extracellular side of the membrane; the sequence is GWSRYIPEGMQCSCGIDYYTRAEGFNNES. N-linked (GlcNAc...) asparagine glycosylation is present at asparagine 200. A helical membrane pass occupies residues 203–224; that stretch reads FVLYMFFCHFTIPLTIIFFCYG. Residues 225 to 252 lie on the Cytoplasmic side of the membrane; sequence RLLCAVKEAAAAQQESETTQRAEREVTR. Residues 253 to 274 traverse the membrane as a helical segment; sequence MVIIMVIGFLVCWLPYASVAWF. At 275 to 286 the chain is on the extracellular side; the sequence is IFTHQGSEFGPL. The helical transmembrane segment at 287-308 threads the bilayer; that stretch reads FMTIPAFFAKSSSIYNPMIYIC. Lysine 296 carries the N6-(retinylidene)lysine modification. Over 309-351 the chain is Cytoplasmic; it reads MNKQFRHCMITTLFCGKNPFEGEEEGASSTKTEASSASSVSPA. Residue cysteine 323 is the site of S-palmitoyl cysteine attachment. The interval 330–351 is disordered; it reads GEEEGASSTKTEASSASSVSPA. The segment covering 335 to 351 has biased composition (low complexity); it reads ASSTKTEASSASSVSPA.

The protein belongs to the G-protein coupled receptor 1 family. Opsin subfamily. Post-translationally, phosphorylated on some or all of the serine and threonine residues present in the C-terminal region. Contains one covalently linked retinal chromophore.

The protein resides in the membrane. It is found in the cell projection. The protein localises to the cilium. Its subcellular location is the photoreceptor outer segment. Photoreceptor required for image-forming vision at low light intensity. While most salt water fish species use retinal as chromophore, most freshwater fish use 3-dehydroretinal, or a mixture of retinal and 3-dehydroretinal. Light-induced isomerization of 11-cis to all-trans retinal triggers a conformational change that activates signaling via G-proteins. Subsequent receptor phosphorylation mediates displacement of the bound G-protein alpha subunit by arrestin and terminates signaling. This Sargocentron diadema (Crown squirrelfish) protein is Rhodopsin (rho).